The following is a 406-amino-acid chain: Tyrosine--tRNA ligase (406 aa).

Tyr-35 serves as a coordination point for L-tyrosine. The short motif at 40–49 (ATSTSLHIGH) is the 'HIGH' region element. L-tyrosine-binding residues include Tyr-166 and Gln-170. The 'KMSKS' region motif lies at 226–230 (KMGKS). Lys-229 provides a ligand contact to ATP. Residues 341-405 (ILLIDLMVLS…IGKKRILRVI (65 aa)) form the S4 RNA-binding domain.

It belongs to the class-I aminoacyl-tRNA synthetase family. TyrS type 1 subfamily. In terms of assembly, homodimer.

Its subcellular location is the cytoplasm. The enzyme catalyses tRNA(Tyr) + L-tyrosine + ATP = L-tyrosyl-tRNA(Tyr) + AMP + diphosphate + H(+). Its function is as follows. Catalyzes the attachment of tyrosine to tRNA(Tyr) in a two-step reaction: tyrosine is first activated by ATP to form Tyr-AMP and then transferred to the acceptor end of tRNA(Tyr). In Borrelia turicatae (strain 91E135), this protein is Tyrosine--tRNA ligase.